The chain runs to 154 residues: Cathelicidin-2 (154 aa).

The first 17 residues, Met1–Ala17, serve as a signal peptide directing secretion. A propeptide spanning residues Leu18–Val122 is cleaved from the precursor. Disulfide bonds link Cys75-Cys86 and Cys97-Cys114.

The protein belongs to the cathelicidin family. Detected in trachea, lung, proventriculus, duodenum, jejunum, ileum, caeca, colon, caecal tonsil, bursa of Fabricius, kidney, ovary, testis, thymus, liver, spleen, bone marrow, skin, uropygial gland, muscle and brain.

It is found in the secreted. Functionally, binds bacterial lipopolysaccharide (LPS). Has potent antimicrobial activity against Gram-positive and Gram-negative bacteria (in vitro). Has hemolytic activity (in vitro). May play a role in the innate immune response. In Gallus gallus (Chicken), this protein is Cathelicidin-2 (CATHL2).